Consider the following 335-residue polypeptide: Tryptophan--tRNA ligase (335 aa).

Residues 9–11 (QST) and 17–18 (GN) each bind ATP. Positions 10–18 (STNSLTLGN) match the 'HIGH' region motif. D137 provides a ligand contact to L-tryptophan. Residues 149-151 (GKD), I189, and 198-202 (KMSKS) contribute to the ATP site. The short motif at 198 to 202 (KMSKS) is the 'KMSKS' region element.

Belongs to the class-I aminoacyl-tRNA synthetase family. Homodimer.

Its subcellular location is the cytoplasm. It catalyses the reaction tRNA(Trp) + L-tryptophan + ATP = L-tryptophyl-tRNA(Trp) + AMP + diphosphate + H(+). Its function is as follows. Catalyzes the attachment of tryptophan to tRNA(Trp). The protein is Tryptophan--tRNA ligase of Malacoplasma penetrans (strain HF-2) (Mycoplasma penetrans).